Consider the following 231-residue polypeptide: Flagellar L-ring protein (231 aa).

Residues 1-18 (MNRLMIVSLLGIATVLGG) form the signal peptide. C19 carries N-palmitoyl cysteine lipidation. The S-diacylglycerol cysteine moiety is linked to residue C19. The disordered stretch occupies residues 118-141 (LSLSAEYGGSRDAKGDSQAGQSNS).

The protein belongs to the FlgH family. In terms of assembly, the basal body constitutes a major portion of the flagellar organelle and consists of four rings (L,P,S, and M) mounted on a central rod.

The protein resides in the cell outer membrane. The protein localises to the bacterial flagellum basal body. Functionally, assembles around the rod to form the L-ring and probably protects the motor/basal body from shearing forces during rotation. The chain is Flagellar L-ring protein from Pseudomonas paraeruginosa (strain DSM 24068 / PA7) (Pseudomonas aeruginosa (strain PA7)).